The following is a 466-amino-acid chain: Ribulose bisphosphate carboxylase large chain (466 aa).

K4 carries the post-translational modification N6,N6,N6-trimethyllysine. Substrate-binding residues include N113 and T163. The active-site Proton acceptor is the K165. K167 provides a ligand contact to substrate. Mg(2+) is bound by residues K191, D193, and E194. K191 bears the N6-carboxylysine mark. Catalysis depends on H284, which acts as the Proton acceptor. Residues R285, H317, and S369 each coordinate substrate.

The protein belongs to the RuBisCO large chain family. Type I subfamily. As to quaternary structure, heterohexadecamer of 8 large chains and 8 small chains; disulfide-linked. The disulfide link is formed within the large subunit homodimers. Requires Mg(2+) as cofactor. Post-translationally, the disulfide bond which can form in the large chain dimeric partners within the hexadecamer appears to be associated with oxidative stress and protein turnover.

It is found in the plastid. The protein localises to the chloroplast. It catalyses the reaction 2 (2R)-3-phosphoglycerate + 2 H(+) = D-ribulose 1,5-bisphosphate + CO2 + H2O. It carries out the reaction D-ribulose 1,5-bisphosphate + O2 = 2-phosphoglycolate + (2R)-3-phosphoglycerate + 2 H(+). RuBisCO catalyzes two reactions: the carboxylation of D-ribulose 1,5-bisphosphate, the primary event in carbon dioxide fixation, as well as the oxidative fragmentation of the pentose substrate in the photorespiration process. Both reactions occur simultaneously and in competition at the same active site. This is Ribulose bisphosphate carboxylase large chain from Drimys winteri (Winter's bark).